The chain runs to 301 residues: Amylovoran biosynthesis glycosyltransferase AmsB (301 aa).

Belongs to the glycosyltransferase 2 family.

It functions in the pathway glycan metabolism; exopolysaccharide biosynthesis. In terms of biological role, involved in the biosynthesis of amylovoran, which functions as a virulence factor. May function as a glycosyl transferase which transfers galactose from UDP-galactose to a lipid-linked amylovoran-subunit precursor. This is Amylovoran biosynthesis glycosyltransferase AmsB (amsB) from Erwinia amylovora (Fire blight bacteria).